The primary structure comprises 537 residues: CTP synthase (537 aa).

Positions 1–269 (MNQTKYIFVT…DVVALKKLDL (269 aa)) are amidoligase domain. A CTP-binding site is contributed by serine 15. Serine 15 is a UTP binding site. 16 to 21 (SLGKGI) provides a ligand contact to ATP. Residue tyrosine 56 participates in L-glutamine binding. Aspartate 73 is an ATP binding site. Positions 73 and 143 each coordinate Mg(2+). Residues 150–152 (DIE), 190–195 (KTKPTQ), and lysine 226 contribute to the CTP site. UTP is bound by residues 190–195 (KTKPTQ) and lysine 226. Residues 295-537 (NIGLVGKYVE…VAAAVNAHKK (243 aa)) enclose the Glutamine amidotransferase type-1 domain. Glycine 357 contacts L-glutamine. Catalysis depends on cysteine 384, which acts as the Nucleophile; for glutamine hydrolysis. Residues 385–388 (LGMQ), glutamate 408, and arginine 465 each bind L-glutamine. Active-site residues include histidine 510 and glutamate 512.

This sequence belongs to the CTP synthase family. Homotetramer.

The enzyme catalyses UTP + L-glutamine + ATP + H2O = CTP + L-glutamate + ADP + phosphate + 2 H(+). The catalysed reaction is L-glutamine + H2O = L-glutamate + NH4(+). It carries out the reaction UTP + NH4(+) + ATP = CTP + ADP + phosphate + 2 H(+). Its pathway is pyrimidine metabolism; CTP biosynthesis via de novo pathway; CTP from UDP: step 2/2. Its activity is regulated as follows. Allosterically activated by GTP, when glutamine is the substrate; GTP has no effect on the reaction when ammonia is the substrate. The allosteric effector GTP functions by stabilizing the protein conformation that binds the tetrahedral intermediate(s) formed during glutamine hydrolysis. Inhibited by the product CTP, via allosteric rather than competitive inhibition. In terms of biological role, catalyzes the ATP-dependent amination of UTP to CTP with either L-glutamine or ammonia as the source of nitrogen. Regulates intracellular CTP levels through interactions with the four ribonucleotide triphosphates. The chain is CTP synthase from Flavobacterium johnsoniae (strain ATCC 17061 / DSM 2064 / JCM 8514 / BCRC 14874 / CCUG 350202 / NBRC 14942 / NCIMB 11054 / UW101) (Cytophaga johnsonae).